The primary structure comprises 326 residues: Putative ABC transporter ATP-binding protein MPN_334 (326 aa).

The ABC transporter domain maps to 7-239 (VEVKHLEKEF…NFGYRLKVNN (233 aa)). 42 to 49 (GQNGAGKT) is an ATP binding site.

Belongs to the ABC transporter superfamily.

The chain is Putative ABC transporter ATP-binding protein MPN_334 from Mycoplasma pneumoniae (strain ATCC 29342 / M129 / Subtype 1) (Mycoplasmoides pneumoniae).